We begin with the raw amino-acid sequence, 1232 residues long: DNA-directed RNA polymerase subunit beta (1232 aa).

The interval 1170–1232 (SVDEDADELE…LDLDDFGDEH (63 aa)) is disordered. Acidic residues predominate over residues 1171–1180 (VDEDADELEV). Over residues 1189–1198 (PEEKEEKEKE) the composition is skewed to basic and acidic residues. Residues 1199–1232 (DSDEYDDLREEDVEPDLEELSLDDLDLDDFGDEH) are compositionally biased toward acidic residues.

Belongs to the RNA polymerase beta chain family. The RNAP catalytic core consists of 2 alpha, 1 beta, 1 beta' and 1 omega subunit. When a sigma factor is associated with the core the holoenzyme is formed, which can initiate transcription.

It carries out the reaction RNA(n) + a ribonucleoside 5'-triphosphate = RNA(n+1) + diphosphate. Its function is as follows. DNA-dependent RNA polymerase catalyzes the transcription of DNA into RNA using the four ribonucleoside triphosphates as substrates. The protein is DNA-directed RNA polymerase subunit beta of Clostridium botulinum (strain Hall / ATCC 3502 / NCTC 13319 / Type A).